We begin with the raw amino-acid sequence, 392 residues long: Frizzled-9 (392 aa).

At 1 to 35 the chain is on the extracellular side; sequence ACDNPEKFQYVEKSLSCAPRCSPGVDVYWSREDKD. The helical transmembrane segment at 36 to 56 threads the bilayer; it reads FAFVWMAVWSTLCFVSTAFTV. Residues 57-72 lie on the Cytoplasmic side of the membrane; sequence LTFLLDPHRFQYPERP. A helical transmembrane segment spans residues 73–93; the sequence is IIFLSMCYNVYSVAFIIRSVA. Residues 94–119 are Extracellular-facing; the sequence is GAETIACDRENGELYIIQEGLESTGC. A helical transmembrane segment spans residues 120–140; the sequence is TIVFLILYYFGMASSLWWVVL. Residues 141–161 are Cytoplasmic-facing; the sequence is TLTWFLAAGKKWGHEAIEAHS. A helical membrane pass occupies residues 162–182; the sequence is SYFHMAAWGIPAMKTIVILTM. The Extracellular portion of the chain corresponds to 183-206; it reads RKVAGDELTGLCYVGSMDVSALTG. Residues 207–227 form a helical membrane-spanning segment; it reads FVLIPLSCYLVVGTSFILTGF. Residues 228–253 are Cytoplasmic-facing; that stretch reads VALFHIRKIMKTGGTNTEKLEKLMVK. Residues 254–274 traverse the membrane as a helical segment; the sequence is IGVFSILYTVPATCVIVCYFY. Residues 275-312 lie on the Extracellular side of the membrane; the sequence is ERLNVDYWNLRALERACVPLPGRRAADCSLEASVPTVA. Residues 313 to 333 form a helical membrane-spanning segment; sequence VFMLKIFMSLVVGITSGVWVW. Topologically, residues 334–392 are cytoplasmic; it reads SSKTLQTWQSLCNRKLGVRTRGKPCSGVSCGGVHCHYKAPTVMLHMTKTDPYLDNPTHV. The Lys-Thr-X-X-X-Trp motif, mediates interaction with the PDZ domain of Dvl family members motif lies at 336 to 341; sequence KTLQTW. Positions 390-392 match the PDZ-binding motif; sequence THV.

This sequence belongs to the G-protein coupled receptor Fz/Smo family.

Its subcellular location is the cell membrane. Functionally, receptor for WNT2 that is coupled to the beta-catenin canonical signaling pathway, which leads to the activation of disheveled proteins, inhibition of GSK-3 kinase, nuclear accumulation of beta-catenin and activation of Wnt target genes. The protein is Frizzled-9 (FZD9) of Gallus gallus (Chicken).